A 1218-amino-acid polypeptide reads, in one-letter code: Structural maintenance of chromosomes protein 2 (1218 aa).

32–39 (GLNGSGKS) contacts ATP. The stretch at 209–517 (VKLKKEKEEY…INSVKIDYKI (309 aa)) forms a coiled coil. In terms of domain architecture, SMC hinge spans 525–654 (DVLGQIYKLI…CSNVDLCKKI (130 aa)). 2 coiled-coil regions span residues 693 to 949 (LNYE…DTVK) and 978 to 1045 (RHDV…KKSE).

Belongs to the SMC family. SMC2 subfamily.

Its subcellular location is the nucleus. Its function is as follows. May play a role in the conversion of interphase chromatin into condensed chromosomes. This Plasmodium falciparum (isolate 3D7) protein is Structural maintenance of chromosomes protein 2.